The chain runs to 333 residues: Ketol-acid reductoisomerase (NADP(+)) (333 aa).

Residues 1–179 (MFYDDDADLT…GGTRAGVIKT (179 aa)) enclose the KARI N-terminal Rossmann domain. NADP(+) is bound by residues 22-25 (YGSQ), Lys-45, Ser-48, Ser-50, and 80-83 (DTAQ). His-105 is a catalytic residue. An NADP(+)-binding site is contributed by Gly-131. Residues 180–325 (TFKDETETDL…KRLRDLMSWV (146 aa)) enclose the KARI C-terminal knotted domain. Residues Asp-188, Glu-192, Glu-224, and Glu-228 each coordinate Mg(2+). A substrate-binding site is contributed by Ser-249.

This sequence belongs to the ketol-acid reductoisomerase family. It depends on Mg(2+) as a cofactor.

It carries out the reaction (2R)-2,3-dihydroxy-3-methylbutanoate + NADP(+) = (2S)-2-acetolactate + NADPH + H(+). The enzyme catalyses (2R,3R)-2,3-dihydroxy-3-methylpentanoate + NADP(+) = (S)-2-ethyl-2-hydroxy-3-oxobutanoate + NADPH + H(+). Its pathway is amino-acid biosynthesis; L-isoleucine biosynthesis; L-isoleucine from 2-oxobutanoate: step 2/4. The protein operates within amino-acid biosynthesis; L-valine biosynthesis; L-valine from pyruvate: step 2/4. Its function is as follows. Involved in the biosynthesis of branched-chain amino acids (BCAA). Catalyzes an alkyl-migration followed by a ketol-acid reduction of (S)-2-acetolactate (S2AL) to yield (R)-2,3-dihydroxy-isovalerate. In the isomerase reaction, S2AL is rearranged via a Mg-dependent methyl migration to produce 3-hydroxy-3-methyl-2-ketobutyrate (HMKB). In the reductase reaction, this 2-ketoacid undergoes a metal-dependent reduction by NADPH to yield (R)-2,3-dihydroxy-isovalerate. The chain is Ketol-acid reductoisomerase (NADP(+)) from Mycobacterium avium.